The chain runs to 426 residues: Putative phosphate permease CPn_0680/CP_0067/CPj0680/CpB0707 (426 aa).

Helical transmembrane passes span 1–21, 42–62, 87–107, 112–132, 137–157, 180–200, 207–227, 260–280, 313–333, 364–384, and 399–419; these read MLPLIIFVLLCGFYTSWNIGA, AVVIAAIFEFFGALLLGDRVA, TAALLATGVWLQLASFFGWPV, SIVGAVIGFGLVLGKGTIIYW, IILISWILSPFMGGCVAYLIF, FLAALVIMTLGTVMISGGVIL, WAVSGVLVCGLLSYIITFYYV, LVVERIFAYLQIIVACFMAFA, LMAFGGIGLVIGLAIWGWRVI, ILGLPISTTHVVVGAVLGIGL, and IVLSWFITLPAGALLSILFFF.

The protein belongs to the inorganic phosphate transporter (PiT) (TC 2.A.20) family.

The protein resides in the cell membrane. Functionally, potential transporter for phosphate. This Chlamydia pneumoniae (Chlamydophila pneumoniae) protein is Putative phosphate permease CPn_0680/CP_0067/CPj0680/CpB0707.